A 172-amino-acid polypeptide reads, in one-letter code: HAD-like hydrolase superfamily protein P8B7.31 (172 aa).

Catalysis depends on Asp-14, which acts as the Nucleophile. Positions 14, 16, and 137 each coordinate Mg(2+). Asp-16 serves as the catalytic Proton donor.

It belongs to the HAD-like hydrolase superfamily.

The protein resides in the cytoplasm. The protein localises to the nucleus. The chain is HAD-like hydrolase superfamily protein P8B7.31 from Schizosaccharomyces pombe (strain 972 / ATCC 24843) (Fission yeast).